The following is a 190-amino-acid chain: Large ribosomal subunit protein bL9 (190 aa).

This sequence belongs to the bacterial ribosomal protein bL9 family.

In terms of biological role, binds to the 23S rRNA. The sequence is that of Large ribosomal subunit protein bL9 from Methylobacterium radiotolerans (strain ATCC 27329 / DSM 1819 / JCM 2831 / NBRC 15690 / NCIMB 10815 / 0-1).